The primary structure comprises 229 residues: GTP cyclohydrolase 1 (229 aa).

Residues 1-26 (MDAKIKPLRGGKPADARPEFQPAELD) form a disordered region. Cys118, His121, and Cys189 together coordinate Zn(2+).

The protein belongs to the GTP cyclohydrolase I family. As to quaternary structure, toroid-shaped homodecamer, composed of two pentamers of five dimers.

The enzyme catalyses GTP + H2O = 7,8-dihydroneopterin 3'-triphosphate + formate + H(+). The protein operates within cofactor biosynthesis; 7,8-dihydroneopterin triphosphate biosynthesis; 7,8-dihydroneopterin triphosphate from GTP: step 1/1. In Rhodopseudomonas palustris (strain BisB5), this protein is GTP cyclohydrolase 1.